The sequence spans 91 residues: uncharacterized protein (91 aa).

The protein localises to the plastid. It is found in the chloroplast. This is an uncharacterized protein from Phalaenopsis aphrodite subsp. formosana (Moth orchid).